Consider the following 182-residue polypeptide: Ribosome-recycling factor (182 aa).

The disordered stretch occupies residues 136–160 (VKKSEKDGDLSEDQSRDEQETIQKE).

The protein belongs to the RRF family.

It localises to the cytoplasm. Responsible for the release of ribosomes from messenger RNA at the termination of protein biosynthesis. May increase the efficiency of translation by recycling ribosomes from one round of translation to another. This chain is Ribosome-recycling factor, found in Prochlorococcus marinus (strain NATL2A).